A 123-amino-acid polypeptide reads, in one-letter code: Large ribosomal subunit protein bL19 (123 aa).

Belongs to the bacterial ribosomal protein bL19 family.

In terms of biological role, this protein is located at the 30S-50S ribosomal subunit interface and may play a role in the structure and function of the aminoacyl-tRNA binding site. The polypeptide is Large ribosomal subunit protein bL19 (Bdellovibrio bacteriovorus (strain ATCC 15356 / DSM 50701 / NCIMB 9529 / HD100)).